Reading from the N-terminus, the 273-residue chain is Shikimate dehydrogenase (NADP(+)) (273 aa).

Residues 19–21 and T66 each bind shikimate; that span reads SQS. The active-site Proton acceptor is K70. E82 lines the NADP(+) pocket. Positions 91 and 107 each coordinate shikimate. Residues 131–135 and M217 contribute to the NADP(+) site; that span reads GAGGA. Y219 serves as a coordination point for shikimate. Residue G241 participates in NADP(+) binding.

Belongs to the shikimate dehydrogenase family. In terms of assembly, homodimer.

The catalysed reaction is shikimate + NADP(+) = 3-dehydroshikimate + NADPH + H(+). The protein operates within metabolic intermediate biosynthesis; chorismate biosynthesis; chorismate from D-erythrose 4-phosphate and phosphoenolpyruvate: step 4/7. Its function is as follows. Involved in the biosynthesis of the chorismate, which leads to the biosynthesis of aromatic amino acids. Catalyzes the reversible NADPH linked reduction of 3-dehydroshikimate (DHSA) to yield shikimate (SA). The chain is Shikimate dehydrogenase (NADP(+)) from Buchnera aphidicola subsp. Schizaphis graminum (strain Sg).